A 295-amino-acid chain; its full sequence is Indole-3-glycerol phosphate synthase (295 aa).

This sequence belongs to the TrpC family.

The enzyme catalyses 1-(2-carboxyphenylamino)-1-deoxy-D-ribulose 5-phosphate + H(+) = (1S,2R)-1-C-(indol-3-yl)glycerol 3-phosphate + CO2 + H2O. It functions in the pathway amino-acid biosynthesis; L-tryptophan biosynthesis; L-tryptophan from chorismate: step 4/5. This is Indole-3-glycerol phosphate synthase from Prochlorococcus marinus (strain MIT 9211).